The sequence spans 339 residues: Glycerol-3-phosphate dehydrogenase [NAD(P)+] (339 aa).

NADPH is bound by residues Ser15, Tyr16, His36, and Lys110. The sn-glycerol 3-phosphate site is built by Lys110, Gly139, and Thr141. An NADPH-binding site is contributed by Ala143. Residues Lys195, Asp248, Ser258, Arg259, and Asn260 each coordinate sn-glycerol 3-phosphate. Residue Lys195 is the Proton acceptor of the active site. Arg259 lines the NADPH pocket. NADPH is bound by residues Val283 and Glu285.

It belongs to the NAD-dependent glycerol-3-phosphate dehydrogenase family.

It localises to the cytoplasm. The enzyme catalyses sn-glycerol 3-phosphate + NAD(+) = dihydroxyacetone phosphate + NADH + H(+). It carries out the reaction sn-glycerol 3-phosphate + NADP(+) = dihydroxyacetone phosphate + NADPH + H(+). It participates in membrane lipid metabolism; glycerophospholipid metabolism. Catalyzes the reduction of the glycolytic intermediate dihydroxyacetone phosphate (DHAP) to sn-glycerol 3-phosphate (G3P), the key precursor for phospholipid synthesis. The sequence is that of Glycerol-3-phosphate dehydrogenase [NAD(P)+] from Pectobacterium atrosepticum (strain SCRI 1043 / ATCC BAA-672) (Erwinia carotovora subsp. atroseptica).